The following is a 669-amino-acid chain: Bestrophin-3 (669 aa).

Residues 1 to 31 (MTVTYSSKVANATFFGFHRLLLKWRGSIYKL) lie on the Cytoplasmic side of the membrane. Ca(2+) is bound at residue A10. Residues 32 to 51 (LYREFIVFAVLYTAISLVYR) form a helical membrane-spanning segment. Topologically, residues 52-60 (LLLTGAQKR) are extracellular. The helical transmembrane segment at 61–82 (YFEKLSIYCDRYAEQIPVTFVL) threads the bilayer. The Cytoplasmic segment spans residues 83 to 237 (GFYVTLVVNR…DWVGIPLVYT (155 aa)). A helical transmembrane segment spans residues 238–255 (QVVTLAVYTFFFACLIGR). The Extracellular segment spans residues 256–274 (QFLDPTKGYVGHDLDLYVP). A helical membrane pass occupies residues 275–288 (IFTLLQFFFYAGWL). Residues 289-669 (KVAEQLINPF…GTPQRPRTWF (381 aa)) are Cytoplasmic-facing. Ca(2+) is bound by residues Q293, N296, D301, and D304. Disordered stretches follow at residues 399–496 (LSTH…TKMP), 533–560 (QPSGTEQQVEPSGTPPGDPNPQTTSAST), 591–627 (TSLGNLGPDPVSPRDALLLPDTETPSETNGIHPGAGS), and 646–669 (ILEFNNEHTGESPKGTPQRPRTWF). A compositionally biased stretch (basic residues) spans 440–451 (NPHRGSPTRKQS). Over residues 475 to 492 (RTSTLQSLSPQSSVRSSP) the composition is skewed to low complexity. Residues 533 to 543 (QPSGTEQQVEP) show a composition bias toward polar residues. A compositionally biased stretch (basic and acidic residues) spans 646 to 656 (ILEFNNEHTGE).

The protein belongs to the anion channel-forming bestrophin (TC 1.A.46) family. Calcium-sensitive chloride channel subfamily. In terms of tissue distribution, expressed in heart. Expressed in brain, retina/retinal pigment epithelium (RPE) and skeletal muscle. Expressed in acinar cells of parotid glands. Expressed in lung, kidney and testis.

It is found in the cell membrane. The catalysed reaction is chloride(in) = chloride(out). Its function is as follows. Ligand-gated anion channel that allows the movement of chloride monoatomic anions across cell membranes when activated by calcium (Ca2+). In terms of biological role, does not function as calcium-gated chloride channel. This is Bestrophin-3 (Best3) from Mus musculus (Mouse).